The sequence spans 439 residues: Tubulin beta chain (439 aa).

Residues Gln11, Glu69, Ser138, Gly142, Thr143, Gly144, Asn204, and Asn226 each contribute to the GTP site. Glu69 contributes to the Mg(2+) binding site.

The protein belongs to the tubulin family. As to quaternary structure, dimer of alpha and beta chains. A typical microtubule is a hollow water-filled tube with an outer diameter of 25 nm and an inner diameter of 15 nM. Alpha-beta heterodimers associate head-to-tail to form protofilaments running lengthwise along the microtubule wall with the beta-tubulin subunit facing the microtubule plus end conferring a structural polarity. Microtubules usually have 13 protofilaments but different protofilament numbers can be found in some organisms and specialized cells. Requires Mg(2+) as cofactor.

It is found in the cytoplasm. The protein resides in the cytoskeleton. Its function is as follows. Tubulin is the major constituent of microtubules, a cylinder consisting of laterally associated linear protofilaments composed of alpha- and beta-tubulin heterodimers. Microtubules grow by the addition of GTP-tubulin dimers to the microtubule end, where a stabilizing cap forms. Below the cap, tubulin dimers are in GDP-bound state, owing to GTPase activity of alpha-tubulin. The chain is Tubulin beta chain (TUB2) from Encephalitozoon cuniculi (strain GB-M1) (Microsporidian parasite).